Reading from the N-terminus, the 377-residue chain is Succinyl-diaminopimelate desuccinylase (377 aa).

Residue His-66 participates in Zn(2+) binding. Residue Asp-68 is part of the active site. Asp-99 provides a ligand contact to Zn(2+). The Proton acceptor role is filled by Glu-133. Glu-134, Glu-162, and His-348 together coordinate Zn(2+).

Belongs to the peptidase M20A family. DapE subfamily. Homodimer. Requires Zn(2+) as cofactor. Co(2+) is required as a cofactor.

It carries out the reaction N-succinyl-(2S,6S)-2,6-diaminopimelate + H2O = (2S,6S)-2,6-diaminopimelate + succinate. Its pathway is amino-acid biosynthesis; L-lysine biosynthesis via DAP pathway; LL-2,6-diaminopimelate from (S)-tetrahydrodipicolinate (succinylase route): step 3/3. Its function is as follows. Catalyzes the hydrolysis of N-succinyl-L,L-diaminopimelic acid (SDAP), forming succinate and LL-2,6-diaminopimelate (DAP), an intermediate involved in the bacterial biosynthesis of lysine and meso-diaminopimelic acid, an essential component of bacterial cell walls. The protein is Succinyl-diaminopimelate desuccinylase of Xylella fastidiosa (strain M23).